We begin with the raw amino-acid sequence, 152 residues long: Deoxyuridine 5'-triphosphate nucleotidohydrolase (152 aa).

Residues 71 to 73 (RSG), N84, 88 to 90 (LID), and M98 contribute to the substrate site.

This sequence belongs to the dUTPase family. It depends on Mg(2+) as a cofactor.

It catalyses the reaction dUTP + H2O = dUMP + diphosphate + H(+). Its pathway is pyrimidine metabolism; dUMP biosynthesis; dUMP from dCTP (dUTP route): step 2/2. In terms of biological role, this enzyme is involved in nucleotide metabolism: it produces dUMP, the immediate precursor of thymidine nucleotides and it decreases the intracellular concentration of dUTP so that uracil cannot be incorporated into DNA. The protein is Deoxyuridine 5'-triphosphate nucleotidohydrolase of Shewanella loihica (strain ATCC BAA-1088 / PV-4).